The sequence spans 313 residues: Porphobilinogen deaminase (313 aa).

The residue at position 241 (C241) is an S-(dipyrrolylmethanemethyl)cysteine.

This sequence belongs to the HMBS family. Monomer. It depends on dipyrromethane as a cofactor.

The catalysed reaction is 4 porphobilinogen + H2O = hydroxymethylbilane + 4 NH4(+). Its pathway is porphyrin-containing compound metabolism; protoporphyrin-IX biosynthesis; coproporphyrinogen-III from 5-aminolevulinate: step 2/4. The protein operates within porphyrin-containing compound metabolism; chlorophyll biosynthesis. In terms of biological role, tetrapolymerization of the monopyrrole PBG into the hydroxymethylbilane pre-uroporphyrinogen in several discrete steps. The chain is Porphobilinogen deaminase from Chlorobium phaeobacteroides (strain DSM 266 / SMG 266 / 2430).